A 230-amino-acid polypeptide reads, in one-letter code: Methyltransferase aurB (230 aa).

Belongs to the methyltransferase superfamily.

Its pathway is polyketide biosynthesis. Functionally, methyltransferase; part of the gene cluster that mediates the biosynthesis of aurovertins, fungal polyketides that exhibit potent inhibition of adenosine triphosphate synthase. Tha biosynthesis starts with the HR-PKS aurA that selects propionate as the starter unit; synthesizes a hexa-ene chain through the repeated functions of the KR and DH domains in the first six iterations; selectively introduces three alpha-methyl substitutions at C4, C6, and C16 using the S-adensylmethionine-dependent cMET; and shuts off KR and DH in the last three iterations to afford a 1,3,5-triketo portion that can undergo intramolecular cyclization to yield the alpha-pyrone intermediate. AurE may act as a cyclase and enhances the rate of pyrone formation and product release of aurA. The methyltransferase aurB then methylates the C17 hydroxyl group. C17 methylation is required to initiate epoxidation by the downstream monooxygenase aurC. The monooxygenase aurC and the epoxide hydrolase aurD can iteratively transform the terminal triene portion of the methylated precursor into the dioxabicyclo[3.2.1]octane scaffold of aurovertin E. Epoxidation modifications of the precursor occur in two separate steps; bis-epoxidation of the two terminal olefins takes place first, followed by another epoxidation that occurs at C7-C8 after tetrahydrofuran formation. The O-acyltransferase aurG converts aurovertin E to aurovertin A. The polypeptide is Methyltransferase aurB (Calcarisporium arbuscula (Dendryphion arbuscula)).